We begin with the raw amino-acid sequence, 412 residues long: Putative pectate lyase 11 (412 aa).

Positions 1–24 (MVSYSNNHFAYAFLLLLTIGNTLA) are cleaved as a signal peptide. 3 residues coordinate Ca(2+): D210, D234, and D238. R290 is an active-site residue.

It belongs to the polysaccharide lyase 1 family. The cofactor is Ca(2+).

It carries out the reaction Eliminative cleavage of (1-&gt;4)-alpha-D-galacturonan to give oligosaccharides with 4-deoxy-alpha-D-galact-4-enuronosyl groups at their non-reducing ends.. It participates in glycan metabolism; pectin degradation; 2-dehydro-3-deoxy-D-gluconate from pectin: step 2/5. This is Putative pectate lyase 11 from Arabidopsis thaliana (Mouse-ear cress).